An 81-amino-acid polypeptide reads, in one-letter code: Large ribosomal subunit protein bL31 (81 aa).

Belongs to the bacterial ribosomal protein bL31 family. Type A subfamily. In terms of assembly, part of the 50S ribosomal subunit.

In terms of biological role, binds the 23S rRNA. The chain is Large ribosomal subunit protein bL31 from Synechocystis sp. (strain ATCC 27184 / PCC 6803 / Kazusa).